Reading from the N-terminus, the 63-residue chain is Cecropin-C (63 aa).

Residues 1–23 (MNFNKIFVFVALILAISLGQSEA) form the signal peptide. Arginine 62 carries the post-translational modification Arginine amide.

It belongs to the cecropin family.

Its subcellular location is the secreted. Its function is as follows. Cecropins have lytic and antibacterial activity against several Gram-positive and Gram-negative bacteria. In Drosophila orena (Fruit fly), this protein is Cecropin-C (CecC).